Here is a 148-residue protein sequence, read N- to C-terminus: uncharacterized protein (148 aa).

In terms of domain architecture, HTH asnC-type spans 4–65; the sequence is LDKVDIQLVK…IPDLDKLGYM (62 aa). Residues 23–42 constitute a DNA-binding region (H-T-H motif); that stretch reads YRELAELMNTTRQRIARRIT.

This is an uncharacterized protein from Pyrococcus abyssi (strain GE5 / Orsay).